The following is a 290-amino-acid chain: Putative speedy protein-like protein 3 (290 aa).

A disordered region spans residues 16-50 (GVDPSPPCRSLGWKRKKEWSDESEEEPEKELAPEP). Residues 36–50 (DESEEEPEKELAPEP) are compositionally biased toward acidic residues.

This sequence belongs to the Speedy/Ringo family.

The protein is Putative speedy protein-like protein 3 of Homo sapiens (Human).